The chain runs to 75 residues: Small ribosomal subunit protein bS18 (75 aa).

It belongs to the bacterial ribosomal protein bS18 family. As to quaternary structure, part of the 30S ribosomal subunit. Forms a tight heterodimer with protein bS6.

Its function is as follows. Binds as a heterodimer with protein bS6 to the central domain of the 16S rRNA, where it helps stabilize the platform of the 30S subunit. The chain is Small ribosomal subunit protein bS18 from Chromobacterium violaceum (strain ATCC 12472 / DSM 30191 / JCM 1249 / CCUG 213 / NBRC 12614 / NCIMB 9131 / NCTC 9757 / MK).